The chain runs to 165 residues: Destrin (165 aa).

The residue at position 2 (Ala2) is an N-acetylalanine. Positions 4-153 (GVQVADEVCR…NRACIAEKLG (150 aa)) constitute an ADF-H domain. The short motif at 30–34 (KKRKK) is the Nuclear localization signal element.

This sequence belongs to the actin-binding proteins ADF family.

Functionally, actin-depolymerizing protein. Severs actin filaments (F-actin) and binds to actin monomers (G-actin). Acts in a pH-independent manner. The polypeptide is Destrin (DSTN) (Gallus gallus (Chicken)).